Here is a 181-residue protein sequence, read N- to C-terminus: CDP-archaeol synthase (181 aa).

The next 5 helical transmembrane spans lie at 7–27, 55–75, 80–100, 128–148, and 150–170; these read VVVAVWAMLPAYVPNNAAVLA, AVGTAAGVALAVALNALRPAA, GVVLPAFPPAAMGTLAFGAMV, FVVVALALTALAVPAWVGDTF, and LPVLVTVAVLTPALHLLTNGI.

This sequence belongs to the CDP-archaeol synthase family. Mg(2+) serves as cofactor.

It is found in the cell membrane. The enzyme catalyses 2,3-bis-O-(geranylgeranyl)-sn-glycerol 1-phosphate + CTP + H(+) = CDP-2,3-bis-O-(geranylgeranyl)-sn-glycerol + diphosphate. The protein operates within membrane lipid metabolism; glycerophospholipid metabolism. In terms of biological role, catalyzes the formation of CDP-2,3-bis-(O-geranylgeranyl)-sn-glycerol (CDP-archaeol) from 2,3-bis-(O-geranylgeranyl)-sn-glycerol 1-phosphate (DGGGP) and CTP. This reaction is the third ether-bond-formation step in the biosynthesis of archaeal membrane lipids. The chain is CDP-archaeol synthase from Halobacterium salinarum (strain ATCC 29341 / DSM 671 / R1).